We begin with the raw amino-acid sequence, 310 residues long: p-hydroxybenzoic acid efflux pump subunit AaeA (310 aa).

Residues 12-32 (AITVILVILAFVAIFRAWVYY) traverse the membrane as a helical segment.

This sequence belongs to the membrane fusion protein (MFP) (TC 8.A.1) family.

It is found in the cell inner membrane. Its function is as follows. Forms an efflux pump with AaeB. In Klebsiella pneumoniae (strain 342), this protein is p-hydroxybenzoic acid efflux pump subunit AaeA.